Reading from the N-terminus, the 341-residue chain is MEPAFGEVNQLGGVFVNGRPLPNAIRLRIVELAQLGIRPCDISRQLRVSHGCVSKILARYNETGSILPGAIGGSKPRVTTPTVVKHIRTYKQRDPGIFAWEIRDRLLADGVCDKYNVPSVSSISRILRNKIGNLAQQGHYDSYKQHQPAPQPALPYNHIYSYPSPITAAAAKVPTPPGVPAIPGSVAMPRTWPSSHSVTDILGIRSITDQVNDSSPYHSPKVEEWSSLGRNNFPAAAPHAVNGLEKGALEQEAKYGQAPNGLPAVSSFVSASSMAPYPTPAQVSPYMTYSAAPSGYVAGHGWQHAGGTPLSPHNCDIPASLAFKGMQAAREGSHSVTASAL.

Residues 4-130 (AFGEVNQLGG…SSISRILRNK (127 aa)) constitute a DNA-binding region (paired). The interval 7–63 (EVNQLGGVFVNGRPLPNAIRLRIVELAQLGIRPCDISRQLRVSHGCVSKILARYNET) is PAI subdomain. Positions 82 to 130 (TVVKHIRTYKQRDPGIFAWEIRDRLLADGVCDKYNVPSVSSISRILRNK) are RED subdomain. Residues 168–189 (AAAAKVPTPPGVPAIPGSVAMP) form an interaction with KDM5B region.

In terms of assembly, interacts with KDM5B.

Its subcellular location is the nucleus. Functionally, transcription factor required for normal development of thymus, parathyroid glands, ultimobranchial bodies, teeth, skeletal elements of skull and larynx as well as distal limbs. The chain is Paired box protein Pax-9 (PAX9) from Propithecus coquereli (Coquerel's sifaka).